The primary structure comprises 181 residues: Oligoribonuclease (181 aa).

Positions 8–171 (LIWIDLEMTG…DDIRESVAEL (164 aa)) constitute an Exonuclease domain. The active site involves Y129.

The protein belongs to the oligoribonuclease family.

It is found in the cytoplasm. In terms of biological role, 3'-to-5' exoribonuclease specific for small oligoribonucleotides. This chain is Oligoribonuclease, found in Photorhabdus laumondii subsp. laumondii (strain DSM 15139 / CIP 105565 / TT01) (Photorhabdus luminescens subsp. laumondii).